Reading from the N-terminus, the 786-residue chain is DENN domain-containing protein 1C (786 aa).

In terms of domain architecture, uDENN spans 13-158; that stretch reads FDWFFEAGCP…MDSSITVRSE (146 aa). Positions 182–318 constitute a cDENN domain; that stretch reads SLPSIPENRN…VVSLLRLRLR (137 aa). The region spanning 320–398 is the dDENN domain; sequence VALSPGEGVS…ESRLEKLNAG (79 aa). An FXDXF motif motif is present at residues 401–405; that stretch reads FSDQF. Residues 481-553 are disordered; it reads KDGDSGLQRG…LSPGDTQNPW (73 aa). The segment covering 527-541 has biased composition (basic and acidic residues); that stretch reads LKTEEGPSEPLRERS. A compositionally biased stretch (polar residues) spans 542–552; that stretch reads PTLSPGDTQNP. S565 is subject to Phosphoserine. A Clathrin box motif is present at residues 570-579; it reads DLLSEILDSL. 2 disordered regions span residues 653 to 741 and 762 to 786; these read YSKN…QPPQ and SHVS…CFEN. Over residues 657–675 the composition is skewed to low complexity; it reads SCSQPFQQSPPSQGDPGPS. Over residues 706–740 the composition is skewed to polar residues; it reads LLVSTEPNSDAVQRLQSISSPSCSHSAENPRNQPP. Residues 770-786 show a composition bias toward basic and acidic residues; that stretch reads PQDKQPRVADLKKCFEN.

As to quaternary structure, exhibits low nucleotide-independent RAB35-binding activity. Interacts with clathrin heavy chain/CLTC and with AP2A2, but not with AP2B1.

The protein resides in the cytoplasm. The protein localises to the cytosol. Its subcellular location is the cytoplasmic vesicle. It is found in the clathrin-coated vesicle. In terms of biological role, guanine nucleotide exchange factor (GEF) which may activate RAB8A, RAB13 and RAB35. Promotes the exchange of GDP to GTP, converting inactive GDP-bound Rab proteins into their active GTP-bound form. In Mus musculus (Mouse), this protein is DENN domain-containing protein 1C (Dennd1c).